Reading from the N-terminus, the 269-residue chain is Undecaprenyl-diphosphatase (269 aa).

8 helical membrane-spanning segments follow: residues Met1–Ile21, Gly40–Phe59, Phe87–Ile107, Leu117–Pro137, Leu147–Ser166, Phe188–Leu208, Pro220–Leu240, and Leu248–Ala268.

The protein belongs to the UppP family.

It localises to the cell inner membrane. It carries out the reaction di-trans,octa-cis-undecaprenyl diphosphate + H2O = di-trans,octa-cis-undecaprenyl phosphate + phosphate + H(+). Functionally, catalyzes the dephosphorylation of undecaprenyl diphosphate (UPP). Confers resistance to bacitracin. This Geobacter sulfurreducens (strain ATCC 51573 / DSM 12127 / PCA) protein is Undecaprenyl-diphosphatase.